The following is a 140-amino-acid chain: Small ribosomal subunit protein uS11c (140 aa).

The protein belongs to the universal ribosomal protein uS11 family. As to quaternary structure, part of the 30S ribosomal subunit.

The protein resides in the plastid. It localises to the chloroplast. This is Small ribosomal subunit protein uS11c from Pelargonium hortorum (Common geranium).